The chain runs to 4061 residues: Hybrid PKS-NRPS synthetase tasS (4061 aa).

Residues 7–472 (QEPIAVIGMA…GTNAHAIIEG (466 aa)) enclose the Ketosynthase family 3 (KS3) domain. C180 is a catalytic residue. The interval 586-911 (VFTGQGAQWP…RQKNDVEELL (326 aa)) is malonyl-CoA:ACP transacylase (MAT) domain. The N-terminal hotdog fold stretch occupies residues 977-1113 (HPLLGRRCVE…ATVNVTFHEP (137 aa)). Residues 977–1280 (HPLLGRRCVE…VRVQPFSVAG (304 aa)) form a dehydratase (DH) domain region. The region spanning 977–1282 (HPLLGRRCVE…VQPFSVAGPQ (306 aa)) is the PKS/mFAS DH domain. H1010 functions as the Proton acceptor; for dehydratase activity in the catalytic mechanism. The segment at 1128 to 1282 (LANAEPQRLY…VQPFSVAGPQ (155 aa)) is C-terminal hotdog fold. D1188 serves as the catalytic Proton donor; for dehydratase activity. The interval 1425-1619 (LDRFYEEGFE…GFNGVETHTP (195 aa)) is methyltransferase (MT) domain. Residues 2153 to 2325 (TYFLLGLSGE…GVVGSDMAIG (173 aa)) are ketoreductase (KR) domain. Positions 2437–2516 (EAIKVVFDTF…LLVEEAVDKL (80 aa)) constitute a Carrier 1 domain. S2475 is subject to O-(pantetheine 4'-phosphoryl)serine. Positions 2527–2617 (EHGGEPDLTQ…QKHQEQTSQS (91 aa)) are disordered. Residues 2556 to 2576 (TSAASSSDTGSDSSPTSNSVS) are compositionally biased toward low complexity. The span at 2577-2592 (ETQTGTPLETPMSTTE) shows a compositional bias: polar residues. The condensation (C) domain stretch occupies residues 2632 to 3077 (QMTFGQNRFW…ELATWDTESE (446 aa)). The tract at residues 3103–3510 (QVIADHPDAV…RGYLTVEGRI (408 aa)) is adenylation (A) (KR) domain. The region spanning 3633–3712 (QNLTATERTL…SMAALLDDGV (80 aa)) is the Carrier 2 domain. Residue S3672 is modified to O-(pantetheine 4'-phosphoryl)serine. Positions 3813–3969 (DIDVVLHCAA…LSPLEDAVEA (157 aa)) are reductase (RED) domain.

This sequence in the C-terminal section; belongs to the NRP synthetase family.

The enzyme catalyses (2S,4S)-4-hydroxy-4-methylglutamate + 8 malonyl-CoA + 3 S-adenosyl-L-methionine + ATP + 8 NADPH + 11 H(+) = (2S)-3-[(2S)-3,5-dioxo-4-[(2E,4R,6R,8E,10E,12E)-4,6,12-trimethyltetradeca-2,8,10,12-tetraenoyl]pyrrolidin-2-yl]-2-hydroxy-2-methylpropanoate + AMP + 3 S-adenosyl-L-homocysteine + 8 CO2 + diphosphate + 8 NADP(+) + 8 CoA + 6 H2O. It functions in the pathway secondary metabolite biosynthesis. Functionally, hybrid PKS-NRPS synthetase; part of the gene cluster that mediates the biosynthesis of the tetramic acids Sch210971 and Sch210972, potential anti-HIV fungal natural product that contain a decalin core. The PKS module of tasS together with the enoylreductase tasC catalyze the formation of the polyketide unit which is then conjugated to 4-hydroxyl-4-methyl glutamate (HMG) by the condensation domain of the tasS NRPS module. One unique structural feature of Sch210971 and Sch210972 is the tetramic acid motif proposed to be derived from the non-proteinogenic amino acid HMG, by a Dieckmann-type condensation catalyzed by the reductase domain of tasS. The aldolase tasA catalyzes the aldol condensation of 2 molecules of pyruvic acid to yield the intermediate 4-hydroxyl-4-methyl-2-oxoglutarate (HMOG), which can then be stereoselectively transaminated, may be by tasG, to form HMG. The Diels-Alderase tas3 then uses the Dieckmann product of tasS as substrate and catalyzes the Diels-Alder cycloaddition to form the decalin ring of Sch210971 and Sch210972. The sequence is that of Hybrid PKS-NRPS synthetase tasS from Hapsidospora irregularis.